A 208-amino-acid chain; its full sequence is Thiamine-phosphate synthase (208 aa).

4-amino-2-methyl-5-(diphosphooxymethyl)pyrimidine-binding positions include 37–39 (QVR) and N70. Residues D71 and D90 each contribute to the Mg(2+) site. A 4-amino-2-methyl-5-(diphosphooxymethyl)pyrimidine-binding site is contributed by T109. Position 135–137 (135–137 (TTS)) interacts with 2-[(2R,5Z)-2-carboxy-4-methylthiazol-5(2H)-ylidene]ethyl phosphate. K138 contacts 4-amino-2-methyl-5-(diphosphooxymethyl)pyrimidine. A166 contacts 2-[(2R,5Z)-2-carboxy-4-methylthiazol-5(2H)-ylidene]ethyl phosphate.

Belongs to the thiamine-phosphate synthase family. The cofactor is Mg(2+).

It catalyses the reaction 2-[(2R,5Z)-2-carboxy-4-methylthiazol-5(2H)-ylidene]ethyl phosphate + 4-amino-2-methyl-5-(diphosphooxymethyl)pyrimidine + 2 H(+) = thiamine phosphate + CO2 + diphosphate. The enzyme catalyses 2-(2-carboxy-4-methylthiazol-5-yl)ethyl phosphate + 4-amino-2-methyl-5-(diphosphooxymethyl)pyrimidine + 2 H(+) = thiamine phosphate + CO2 + diphosphate. The catalysed reaction is 4-methyl-5-(2-phosphooxyethyl)-thiazole + 4-amino-2-methyl-5-(diphosphooxymethyl)pyrimidine + H(+) = thiamine phosphate + diphosphate. It participates in cofactor biosynthesis; thiamine diphosphate biosynthesis; thiamine phosphate from 4-amino-2-methyl-5-diphosphomethylpyrimidine and 4-methyl-5-(2-phosphoethyl)-thiazole: step 1/1. Functionally, condenses 4-methyl-5-(beta-hydroxyethyl)thiazole monophosphate (THZ-P) and 2-methyl-4-amino-5-hydroxymethyl pyrimidine pyrophosphate (HMP-PP) to form thiamine monophosphate (TMP). The protein is Thiamine-phosphate synthase of Salinispora tropica (strain ATCC BAA-916 / DSM 44818 / JCM 13857 / NBRC 105044 / CNB-440).